A 485-amino-acid polypeptide reads, in one-letter code: Sulfate adenylyltransferase subunit 1 (485 aa).

Residues 17–232 (KDLLRLLTAG…LETVHIDNDH (216 aa)) form the tr-type G domain. The tract at residues 26-33 (GSVDDGKS) is G1. 26 to 33 (GSVDDGKS) contacts GTP. Residues 84–88 (GITID) are G2. Positions 105-108 (DTPG) are G3. GTP is bound by residues 105 to 109 (DTPGH) and 160 to 163 (NKMD). Residues 160–163 (NKMD) are G4. The G5 stretch occupies residues 197–199 (SAL).

The protein belongs to the TRAFAC class translation factor GTPase superfamily. Classic translation factor GTPase family. CysN/NodQ subfamily. As to quaternary structure, heterodimer composed of CysD, the smaller subunit, and CysN.

It carries out the reaction sulfate + ATP + H(+) = adenosine 5'-phosphosulfate + diphosphate. Its pathway is sulfur metabolism; hydrogen sulfide biosynthesis; sulfite from sulfate: step 1/3. Functionally, with CysD forms the ATP sulfurylase (ATPS) that catalyzes the adenylation of sulfate producing adenosine 5'-phosphosulfate (APS) and diphosphate, the first enzymatic step in sulfur assimilation pathway. APS synthesis involves the formation of a high-energy phosphoric-sulfuric acid anhydride bond driven by GTP hydrolysis by CysN coupled to ATP hydrolysis by CysD. The chain is Sulfate adenylyltransferase subunit 1 from Bacteroides thetaiotaomicron (strain ATCC 29148 / DSM 2079 / JCM 5827 / CCUG 10774 / NCTC 10582 / VPI-5482 / E50).